The chain runs to 373 residues: Queuine tRNA-ribosyltransferase (373 aa).

Aspartate 90 (proton acceptor) is an active-site residue. Residues 90–94 (DSGGF), aspartate 144, glutamine 193, and glycine 220 contribute to the substrate site. The segment at 251-257 (GVGTPED) is RNA binding. Aspartate 270 functions as the Nucleophile in the catalytic mechanism. Positions 275-279 (TRNAR) are RNA binding; important for wobble base 34 recognition. 4 residues coordinate Zn(2+): cysteine 308, cysteine 310, cysteine 313, and histidine 339.

Belongs to the queuine tRNA-ribosyltransferase family. In terms of assembly, homodimer. Within each dimer, one monomer is responsible for RNA recognition and catalysis, while the other monomer binds to the replacement base PreQ1. The cofactor is Zn(2+).

The enzyme catalyses 7-aminomethyl-7-carbaguanine + guanosine(34) in tRNA = 7-aminomethyl-7-carbaguanosine(34) in tRNA + guanine. It functions in the pathway tRNA modification; tRNA-queuosine biosynthesis. Catalyzes the base-exchange of a guanine (G) residue with the queuine precursor 7-aminomethyl-7-deazaguanine (PreQ1) at position 34 (anticodon wobble position) in tRNAs with GU(N) anticodons (tRNA-Asp, -Asn, -His and -Tyr). Catalysis occurs through a double-displacement mechanism. The nucleophile active site attacks the C1' of nucleotide 34 to detach the guanine base from the RNA, forming a covalent enzyme-RNA intermediate. The proton acceptor active site deprotonates the incoming PreQ1, allowing a nucleophilic attack on the C1' of the ribose to form the product. After dissociation, two additional enzymatic reactions on the tRNA convert PreQ1 to queuine (Q), resulting in the hypermodified nucleoside queuosine (7-(((4,5-cis-dihydroxy-2-cyclopenten-1-yl)amino)methyl)-7-deazaguanosine). The sequence is that of Queuine tRNA-ribosyltransferase from Campylobacter lari (strain RM2100 / D67 / ATCC BAA-1060).